Reading from the N-terminus, the 392-residue chain is ATP-dependent RNA helicase eIF4A (392 aa).

The Q motif motif lies at 19 to 47; it reads DTFDDMNLKPELLRGIYAYGFERPSAIQQ. Residues 50–220 form the Helicase ATP-binding domain; that stretch reads IMPILGERDV…TKFMRDPIRI (171 aa). 63–70 contacts ATP; it reads AQSGTGKT. S65 carries the post-translational modification Phosphoserine. A DEAD box motif is present at residues 168 to 171; that stretch reads DEAD. Residues 231-392 form the Helicase C-terminal domain; it reads GIKQFYVAVE…EMPMNIADLI (162 aa).

This sequence belongs to the DEAD box helicase family. eIF4A subfamily. Component of the eIF4F complex, which composition varies with external and internal environmental conditions. It is composed of at least eIF4A, eIF4E and eIF4G.

It localises to the cytoplasm. The enzyme catalyses ATP + H2O = ADP + phosphate + H(+). Functionally, ATP-dependent RNA helicase which is a subunit of the eIF4F complex involved in cap recognition and is required for mRNA binding to ribosome. In the current model of translation initiation, eIF4A unwinds RNA secondary structures in the 5'-UTR of mRNAs which is necessary to allow efficient binding of the small ribosomal subunit, and subsequent scanning for the initiator codon. In Schizosaccharomyces pombe (strain 972 / ATCC 24843) (Fission yeast), this protein is ATP-dependent RNA helicase eIF4A (tif1).